We begin with the raw amino-acid sequence, 97 residues long: Putative mitochondrial import inner membrane translocase subunit Tim8 A-B (97 aa).

The short motif at 43-66 (CWEKCMDKPGPRLDGRAELCLVNC) is the Twin CX3C motif element. 2 cysteine pairs are disulfide-bonded: cysteine 43–cysteine 66 and cysteine 47–cysteine 62.

It belongs to the small Tim family. In terms of assembly, heterohexamer; possibly composed of 3 copies of TIMM8AB and 3 copies of TIMM13.

It is found in the mitochondrion inner membrane. Putative mitochondrial intermembrane chaperone that participates in the import and insertion of some multi-pass transmembrane proteins into the mitochondrial inner membrane. Also required for the transfer of beta-barrel precursors from the TOM complex to the sorting and assembly machinery (SAM complex) of the outer membrane. Acts as a chaperone-like protein that protects the hydrophobic precursors from aggregation and guide them through the mitochondrial intermembrane space. This Mus musculus (Mouse) protein is Putative mitochondrial import inner membrane translocase subunit Tim8 A-B (Timm8a2).